A 101-amino-acid chain; its full sequence is Small ribosomal subunit protein uS14 (101 aa).

The protein belongs to the universal ribosomal protein uS14 family. In terms of assembly, part of the 30S ribosomal subunit. Contacts proteins S3 and S10.

Functionally, binds 16S rRNA, required for the assembly of 30S particles and may also be responsible for determining the conformation of the 16S rRNA at the A site. The protein is Small ribosomal subunit protein uS14 of Kocuria rhizophila (strain ATCC 9341 / DSM 348 / NBRC 103217 / DC2201).